The chain runs to 474 residues: PTS system N-acetylmuramic acid-specific EIIBC component (474 aa).

The 89-residue stretch at 1-89 (MAKEISSELL…SELLGEAPVQ (89 aa)) folds into the PTS EIIB type-1 domain. Over 1–123 (MAKEISSELL…LAKFATIFTP (123 aa)) the chain is Cytoplasmic. The active-site Phosphocysteine intermediate; for EIIB activity is the C29. Positions 115-474 (AKFATIFTPL…LFGCRNVNLD (360 aa)) constitute a PTS EIIC type-1 domain. The chain crosses the membrane as a helical span at residues 124-144 (LIPGFIAAGLLLGIATLIATV). The Periplasmic portion of the chain corresponds to 145 to 157 (MHVPADAQGTLPD). Residues 158–178 (ALNFMKVFSKGLFTFLVILVG) traverse the membrane as a helical segment. The Cytoplasmic segment spans residues 179 to 180 (YN). The chain crosses the membrane as a helical span at residues 181-201 (AAQAFGGTGVNGAIIAALFLL). Residues 202 to 217 (GYNPAATTGYYAGFHD) lie on the Periplasmic side of the membrane. Residues 218 to 238 (FFGLPIDPRGNIIGVLIAAWA) traverse the membrane as a helical segment. Topologically, residues 239–260 (CARIEGMVRRFMPDDLDMLLTS) are cytoplasmic. A helical membrane pass occupies residues 261–281 (LITLLITATLAYLIIMPLGGW). Topologically, residues 282-301 (LFEGMSWLFMHLNSNPLGCA) are periplasmic. A helical membrane pass occupies residues 302 to 322 (VLAGLFLIAVVFGVHQGFIPV). Residues 323–334 (YLALMDSQGFNS) are Cytoplasmic-facing. A helical membrane pass occupies residues 335–355 (LFPILSMAGAGQVGAALALYW). The Periplasmic portion of the chain corresponds to 356–368 (RAQPHSGLRSQVR). Residues 369 to 389 (GAIIPGLLGVGEPLIYGVTLP) form a helical membrane-spanning segment. The Cytoplasmic portion of the chain corresponds to 390–393 (RMKP). A helical transmembrane segment spans residues 394–414 (FITACLGGAAGGLFIGLIAWW). The Periplasmic segment spans residues 415–440 (GLPMGLNSAFGPSGLVALPLMTSAQG). Residues 441–461 (ILPAMAIYAGGILVAWVCGFI) form a helical membrane-spanning segment. Topologically, residues 462 to 474 (FTTLFGCRNVNLD) are cytoplasmic.

Its subcellular location is the cell inner membrane. It carries out the reaction N-acetyl-beta-D-muramate(out) + N(pros)-phospho-L-histidyl-[protein] = N-acetyl-beta-D-muramate 6-phosphate(in) + L-histidyl-[protein]. Its function is as follows. The phosphoenolpyruvate-dependent sugar phosphotransferase system (sugar PTS), a major carbohydrate active transport system, catalyzes the phosphorylation of incoming sugar substrates concomitantly with their translocation across the cell membrane. This system is involved in N-acetylmuramic acid (MurNAc) transport, yielding cytoplasmic MurNAc-6-P. Is also able to take up anhydro-N-acetylmuramic acid (anhMurNAc), but cannot phosphorylate the carbon 6, probably because of the 1,6-anhydro ring. In Shigella dysenteriae serotype 1 (strain Sd197), this protein is PTS system N-acetylmuramic acid-specific EIIBC component (murP).